The sequence spans 257 residues: Aspartate/glutamate leucyltransferase (257 aa).

Belongs to the R-transferase family. Bpt subfamily.

It is found in the cytoplasm. The catalysed reaction is N-terminal L-glutamyl-[protein] + L-leucyl-tRNA(Leu) = N-terminal L-leucyl-L-glutamyl-[protein] + tRNA(Leu) + H(+). It catalyses the reaction N-terminal L-aspartyl-[protein] + L-leucyl-tRNA(Leu) = N-terminal L-leucyl-L-aspartyl-[protein] + tRNA(Leu) + H(+). In terms of biological role, functions in the N-end rule pathway of protein degradation where it conjugates Leu from its aminoacyl-tRNA to the N-termini of proteins containing an N-terminal aspartate or glutamate. The polypeptide is Aspartate/glutamate leucyltransferase (Phenylobacterium zucineum (strain HLK1)).